The following is a 615-amino-acid chain: Increased rDNA silencing protein 4 (615 aa).

4 disordered regions span residues 38–135 (SNEV…SSHS), 152–260 (LLGI…NRSQ), 277–304 (PSIA…NYSS), and 323–445 (KPKH…NEDK). Positions 50–65 (VSRNPQTRLSEPSLQK) are enriched in polar residues. Composition is skewed to low complexity over residues 121–135 (HSQS…SSHS) and 157–168 (SRSSSRNGSNES). At serine 180 the chain carries Phosphoserine. Residues 184 to 198 (LLTSFSSGRRLSSSS) are compositionally biased toward low complexity. Residues 248–260 (NPDTSDVISNRSQ) show a composition bias toward polar residues. The span at 281-290 (SSNTTTTTSN) shows a compositional bias: low complexity. The span at 365–377 (ENDHASSLHEGNL) shows a compositional bias: basic and acidic residues. Positions 389–402 (DVYDDTDSDSESDQ) are enriched in acidic residues. Residues 409 to 438 (KPRKRDRIKRKIRNSANKTAHHRPIHRTRD) are compositionally biased toward basic residues. The EH domain occupies 460-571 (ERKRYESMWV…QCVWDSVDRY (112 aa)).

It belongs to the IRS4 family. As to quaternary structure, interacts with INP51.

Its function is as follows. With TAX4, acts as a positive regulator of INP51 activity and phosphatidylinositol 4,5-bisphosphate turnover. Negatively regulates signaling through the cell integrity pathway, including the MAP kinase SLT2. Also seems to be involved in rDNA silencing. In Saccharomyces cerevisiae (strain ATCC 204508 / S288c) (Baker's yeast), this protein is Increased rDNA silencing protein 4 (IRS4).